We begin with the raw amino-acid sequence, 1054 residues long: DIS3-like exonuclease 1 (1054 aa).

Positions 236–309 (AGIKSGRYIQ…PKNEWKGRTV (74 aa)) constitute a CSD1 domain. Residues 365 to 431 (ILVTPWDYRI…GEIATILVEN (67 aa)) enclose the CSD2 domain. Residues 465-816 (RKDLRKSHLV…VHRLLMAAIS (352 aa)) form the RNB domain. Ser-989 carries the phosphoserine modification.

The protein belongs to the RNR ribonuclease family. As to quaternary structure, component of the RNA exosome complex. The catalytically inactive RNA exosome core (Exo-9) complex is believed to associate with catalytic subunits EXOSC10, and DIS3 or DIS3L in cytoplasmic- and nuclear-specific RNA exosome complex forms. Mg(2+) is required as a cofactor.

It localises to the cytoplasm. The catalysed reaction is Exonucleolytic cleavage in the 3'- to 5'-direction to yield nucleoside 5'-phosphates.. Functionally, catalytic component of the RNA exosome complex which has 3'-&gt;5' exoribonuclease activity and participates in a multitude of cellular RNA processing and degradation events. In the cytoplasm, the RNA exosome complex is involved in general mRNA turnover and specifically degrades inherently unstable mRNAs containing AU-rich elements (AREs) within their 3' untranslated regions, and in RNA surveillance pathways, preventing translation of aberrant mRNAs. It seems to be involved in degradation of histone mRNA. The sequence is that of DIS3-like exonuclease 1 (DIS3L) from Homo sapiens (Human).